We begin with the raw amino-acid sequence, 187 residues long: Bifunctional protein PyrR (187 aa).

Positions 109-121 (VILVDDVLYSGRS) match the PRPP-binding motif.

Belongs to the purine/pyrimidine phosphoribosyltransferase family. PyrR subfamily.

It catalyses the reaction UMP + diphosphate = 5-phospho-alpha-D-ribose 1-diphosphate + uracil. Its function is as follows. Regulates the transcription of the pyrimidine nucleotide (pyr) operon in response to exogenous pyrimidines. Functionally, also displays a weak uracil phosphoribosyltransferase activity which is not physiologically significant. The sequence is that of Bifunctional protein PyrR from Mycobacterium ulcerans (strain Agy99).